Consider the following 160-residue polypeptide: MSTLKKPDLSDPALRAKLAKGMGHNYYGEPAWPNDLLYVFPVVIFGTIGLCTGLAIMDPTMIGEPADPFATPLEILPEWYLYPVFQILRILPNKLLGIACMAGVPLGLMLVPFIESVNKFQNPFRRPVATAIFLFGTVVTIWLGIGATFPIDISLTLGLF.

3 helical membrane-spanning segments follow: residues 36-56 (LLYV…GLAI), 95-115 (LLGI…PFIE), and 131-151 (AIFL…TFPI).

This sequence belongs to the cytochrome b family. PetD subfamily. As to quaternary structure, the 4 large subunits of the cytochrome b6-f complex are cytochrome b6, subunit IV (17 kDa polypeptide, PetD), cytochrome f and the Rieske protein, while the 4 small subunits are PetG, PetL, PetM and PetN. The complex functions as a dimer.

It localises to the cellular thylakoid membrane. Its function is as follows. Component of the cytochrome b6-f complex, which mediates electron transfer between photosystem II (PSII) and photosystem I (PSI), cyclic electron flow around PSI, and state transitions. In Microcystis aeruginosa (strain NIES-843 / IAM M-2473), this protein is Cytochrome b6-f complex subunit 4.